The sequence spans 143 residues: Putative nickel-responsive regulator (143 aa).

Ni(2+) is bound by residues His-82, His-97, His-99, and Cys-105.

This sequence belongs to the transcriptional regulatory CopG/NikR family. Ni(2+) is required as a cofactor.

Its function is as follows. Transcriptional regulator. This Helicobacter hepaticus (strain ATCC 51449 / 3B1) protein is Putative nickel-responsive regulator.